The following is a 170-amino-acid chain: Ribosome maturation factor RimM (170 aa).

One can recognise a PRC barrel domain in the interval 98–170; it reads PDEYYWVDLE…RIVVDWDPEF (73 aa).

This sequence belongs to the RimM family. As to quaternary structure, binds ribosomal protein uS19.

It is found in the cytoplasm. Its function is as follows. An accessory protein needed during the final step in the assembly of 30S ribosomal subunit, possibly for assembly of the head region. Essential for efficient processing of 16S rRNA. May be needed both before and after RbfA during the maturation of 16S rRNA. It has affinity for free ribosomal 30S subunits but not for 70S ribosomes. The protein is Ribosome maturation factor RimM of Xylella fastidiosa (strain 9a5c).